The chain runs to 163 residues: Zinc finger A20 and AN1 domain-containing stress-associated protein 3 (163 aa).

An A20-type zinc finger spans residues 7–41; it reads LQEPRLCANNCGFFGSTATQNLCSKCFRDLQHQEQ. Residues Cys-13, Cys-17, Cys-29, and Cys-32 each contribute to the Zn(2+) site. The interval 57-101 is disordered; the sequence is VGAAASSSVSPPPPPPADSKEIVEAKSEKRAAAEPEEADGPPQDP. A compositionally biased stretch (basic and acidic residues) spans 74–89; it reads DSKEIVEAKSEKRAAA. The AN1-type zinc finger occupies 98 to 144; sequence PQDPKRCLTCRRRVGITGFRCRCGFVFCGTHRYAEQHECSFDFKRMG. Residues Cys-104, Cys-107, Cys-118, Cys-120, Cys-125, His-128, His-134, and Cys-136 each contribute to the Zn(2+) site.

In terms of biological role, may be involved in environmental stress response. This is Zinc finger A20 and AN1 domain-containing stress-associated protein 3 (SAP3) from Arabidopsis thaliana (Mouse-ear cress).